We begin with the raw amino-acid sequence, 1180 residues long: DNA-directed RNA polymerase subunit beta (1180 aa).

This sequence belongs to the RNA polymerase beta chain family. As to quaternary structure, the RNAP catalytic core consists of 2 alpha, 1 beta, 1 beta' and 1 omega subunit. When a sigma factor is associated with the core the holoenzyme is formed, which can initiate transcription.

The enzyme catalyses RNA(n) + a ribonucleoside 5'-triphosphate = RNA(n+1) + diphosphate. Functionally, DNA-dependent RNA polymerase catalyzes the transcription of DNA into RNA using the four ribonucleoside triphosphates as substrates. In Macrococcus caseolyticus (strain JCSC5402) (Macrococcoides caseolyticum), this protein is DNA-directed RNA polymerase subunit beta.